A 152-amino-acid chain; its full sequence is Superoxide dismutase [Cu-Zn] (152 aa).

3 residues coordinate Cu cation: H45, H47, and H62. A disulfide bridge links C56 with C145. Zn(2+) contacts are provided by H62, H70, H79, and D82. Residue H119 coordinates Cu cation.

Belongs to the Cu-Zn superoxide dismutase family. As to quaternary structure, homodimer. Requires Cu cation as cofactor. Zn(2+) is required as a cofactor.

It localises to the cytoplasm. It catalyses the reaction 2 superoxide + 2 H(+) = H2O2 + O2. Its function is as follows. Destroys radicals which are normally produced within the cells and which are toxic to biological systems. In Zantedeschia aethiopica (White calla lily), this protein is Superoxide dismutase [Cu-Zn] (SODCC).